The following is a 275-amino-acid chain: Dermonecrotic toxin SpeSicTox-betaIIA3ii (275 aa).

Residue histidine 5 is part of the active site. The Mg(2+) site is built by glutamate 25 and aspartate 27. Catalysis depends on histidine 41, which acts as the Nucleophile. 2 disulfides stabilise this stretch: cysteine 45–cysteine 51 and cysteine 47–cysteine 190. Residue aspartate 85 participates in Mg(2+) binding.

Belongs to the arthropod phospholipase D family. Class II subfamily. It depends on Mg(2+) as a cofactor. As to expression, expressed by the venom gland.

The protein resides in the secreted. The enzyme catalyses an N-(acyl)-sphingosylphosphocholine = an N-(acyl)-sphingosyl-1,3-cyclic phosphate + choline. It catalyses the reaction an N-(acyl)-sphingosylphosphoethanolamine = an N-(acyl)-sphingosyl-1,3-cyclic phosphate + ethanolamine. The catalysed reaction is a 1-acyl-sn-glycero-3-phosphocholine = a 1-acyl-sn-glycero-2,3-cyclic phosphate + choline. It carries out the reaction a 1-acyl-sn-glycero-3-phosphoethanolamine = a 1-acyl-sn-glycero-2,3-cyclic phosphate + ethanolamine. Functionally, dermonecrotic toxins cleave the phosphodiester linkage between the phosphate and headgroup of certain phospholipids (sphingolipid and lysolipid substrates), forming an alcohol (often choline) and a cyclic phosphate. This toxin acts on sphingomyelin (SM). It may also act on ceramide phosphoethanolamine (CPE), lysophosphatidylcholine (LPC) and lysophosphatidylethanolamine (LPE), but not on lysophosphatidylserine (LPS), and lysophosphatidylglycerol (LPG). It acts by transphosphatidylation, releasing exclusively cyclic phosphate products as second products. Induces dermonecrosis, hemolysis, increased vascular permeability, edema, inflammatory response, and platelet aggregation. The sequence is that of Dermonecrotic toxin SpeSicTox-betaIIA3ii from Sicarius peruensis (Six-eyed sand spider).